Reading from the N-terminus, the 336-residue chain is Calcium-gated potassium channel MthK (336 aa).

Topologically, residues 1 to 20 (MVLVIEIIRKHLPRVLKVPA) are cytoplasmic. The helical transmembrane segment at 21-41 (TRILLLVLAVIIYGTAGFHFI) threads the bilayer. Over 42–48 (EGESWTV) the chain is Extracellular. An intramembrane region (helical; Pore-forming) is located at residues 49-58 (SLYWTFVTIA). The pore-forming intramembrane region spans 59–64 (TVGYGD). The Selectivity filter motif lies at 59–64 (TVGYGD). The Extracellular segment spans residues 65–69 (YSPST). A helical transmembrane segment spans residues 70–95 (PLGMYFTVTLIVLGIGTFAVAVERLL). Over 96 to 106 (EFLINREQMKL) the chain is Cytoplasmic. In terms of domain architecture, RCK N-terminal spans 115 to 230 (SRHVVICGWS…RMAGADQVIS (116 aa)). Residues D184, E210, and E212 each coordinate Ca(2+). One can recognise an RCK C-terminal domain in the interval 252-336 (VQDVLAEEST…IERLKNYISA (85 aa)).

In terms of assembly, homotetramer.

Its subcellular location is the cell membrane. Calcium-gated potassium channel. This chain is Calcium-gated potassium channel MthK (mthK), found in Methanothermobacter thermautotrophicus (strain ATCC 29096 / DSM 1053 / JCM 10044 / NBRC 100330 / Delta H) (Methanobacterium thermoautotrophicum).